Reading from the N-terminus, the 309-residue chain is MSSSAKKQTLFISTLIISWYSSNIGVLLLNKFLLSNYGFKFPIFLTMCHMSACAILSYISIVFLKLVPLQHLKSRSQFLKVATLSIVFCASVVGGNISLRYLPVSFNQAVGATTPFFTALFAYLMTFKREAWVTYGALVPVVAGVVIASGGEPGFHWFGFIMCISATAARAFKSVLQGILLSSEGEKLNSMNLMLYMSPIAVIALLPVTLFMEPDVISVTLTLAKQHQYMWILLLVNSVMAYSANLLNFLVTKHTSALTLQVLGNAKGAVAVVISILIFQNPVTVMGIGGYSITVLGVVAYGETKRRFR.

The next 10 helical transmembrane spans lie at 9–29 (TLFI…VLLL), 43–63 (IFLT…SIVF), 78–98 (FLKV…GNIS), 104–124 (VSFN…FAYL), 131–151 (AWVT…ASGG), 152–172 (EPGF…ARAF), 193–213 (LMLY…LFME), 231–251 (WILL…NFLV), 256–278 (SALT…SILI), and 283–302 (VTVM…VAYG).

This sequence belongs to the TPT transporter family. TPT (TC 2.A.7.9) subfamily. As to expression, ubiquitous.

Its subcellular location is the golgi apparatus membrane. Functionally, UDP-glucuronic acid transporter that modulates the polysaccharide composition of seed mucilage. Transports UDP-glucuronic acid (UDP-GlcA) and UDP-galacturonic acid (UDP-GalA) in vitro. The polypeptide is UDP-URONIC ACID TRANSPORTER 1 (Arabidopsis thaliana (Mouse-ear cress)).